We begin with the raw amino-acid sequence, 500 residues long: Lycopene beta cyclase, chloroplastic (500 aa).

The transit peptide at M1–G81 directs the protein to the chloroplast. Residue L86–P114 coordinates NAD(+).

The protein belongs to the lycopene cyclase family.

The protein resides in the plastid. The protein localises to the chloroplast. The catalysed reaction is a carotenoid psi-end group = a carotenoid beta-end derivative. The protein operates within carotenoid biosynthesis; beta-carotene biosynthesis. It participates in carotenoid biosynthesis; beta-zeacarotene biosynthesis. In terms of biological role, catalyzes the double cyclization reaction which converts lycopene to beta-carotene and neurosporene to beta-zeacarotene. In Nicotiana tabacum (Common tobacco), this protein is Lycopene beta cyclase, chloroplastic (LCY1).